Here is a 622-residue protein sequence, read N- to C-terminus: Chaperone protein HscA homolog (622 aa).

The protein belongs to the heat shock protein 70 family.

Chaperone involved in the maturation of iron-sulfur cluster-containing proteins. Has a low intrinsic ATPase activity which is markedly stimulated by HscB. The sequence is that of Chaperone protein HscA homolog from Burkholderia pseudomallei (strain K96243).